The following is a 181-amino-acid chain: TATA-box-binding protein C (181 aa).

2 consecutive repeat copies span residues 5 to 83 (IANI…LGML) and 99 to 177 (VENV…QSKV).

Belongs to the TBP family.

General factor that plays a role in the activation of archaeal genes transcribed by RNA polymerase. Binds specifically to the TATA box promoter element which lies close to the position of transcription initiation. This Halobacterium salinarum (strain ATCC 700922 / JCM 11081 / NRC-1) (Halobacterium halobium) protein is TATA-box-binding protein C (tbpC1).